Consider the following 90-residue polypeptide: Small ribosomal subunit protein uS15c (90 aa).

This sequence belongs to the universal ribosomal protein uS15 family. As to quaternary structure, part of the 30S ribosomal subunit.

It is found in the plastid. The protein resides in the chloroplast. The chain is Small ribosomal subunit protein uS15c (rps15) from Manihot esculenta (Cassava).